A 170-amino-acid polypeptide reads, in one-letter code: Universal stress protein MJ0531 (170 aa).

It belongs to the universal stress protein A family.

This Methanocaldococcus jannaschii (strain ATCC 43067 / DSM 2661 / JAL-1 / JCM 10045 / NBRC 100440) (Methanococcus jannaschii) protein is Universal stress protein MJ0531.